Here is a 279-residue protein sequence, read N- to C-terminus: MNENNKNNSSEDLNNNNNNNNNNNNIKKTHHRYSAKYKHSLVPSNVGNSGLSGNGVSQKELMSTFKYKSTRTPRLKIEPTIDNLFPSQSTSKSKSNTTNSSPITIMKPKVSKSISNYSNNKYNNNNNNNNNVSTSTSTPIPTTATTTNGNNIDSSLFTSLNSIQTTINGKQSTMIPFSPYSLINCLNSMSSLDENEINNLPIFAPILPPINQQSVNDLNNNNKNDNNKNDNNKNNNNNNNNDNNNNDDNNPTTKKKKVKSQYYMESLAERLSNSNSNGE.

3 stretches are compositionally biased toward low complexity: residues 1 to 25 (MNENNKNNSSEDLNNNNNNNNNNNN), 86 to 151 (PSQS…NGNN), and 232 to 250 (NKNNNNNNNNDNNNNDDNN). Disordered stretches follow at residues 1-27 (MNENNKNNSSEDLNNNNNNNNNNNNIK), 83-153 (NLFP…NNID), and 213-260 (QSVN…KVKS).

This is an uncharacterized protein from Dictyostelium discoideum (Social amoeba).